Consider the following 247-residue polypeptide: Isoprenyl transferase (247 aa).

The active site involves D18. D18 serves as a coordination point for Mg(2+). Substrate-binding positions include 19 to 22 (GNGR), W23, R31, H35, and 63 to 65 (SSE). Residue N66 is the Proton acceptor of the active site. Substrate is bound by residues W67, R69, R186, and 192 to 194 (RLS). E205 contributes to the Mg(2+) binding site.

It belongs to the UPP synthase family. In terms of assembly, homodimer. Mg(2+) serves as cofactor.

Catalyzes the condensation of isopentenyl diphosphate (IPP) with allylic pyrophosphates generating different type of terpenoids. In Rhizobium meliloti (strain 1021) (Ensifer meliloti), this protein is Isoprenyl transferase.